The following is a 236-amino-acid chain: Uridylate kinase (236 aa).

Position 10–13 (10–13) interacts with ATP; it reads KLSG. Position 52 (Gly52) interacts with UMP. Gly53 and Arg57 together coordinate ATP. UMP-binding positions include Asp72 and 133–140; that span reads TGNPFFTT. ATP contacts are provided by Thr160, Tyr166, and Asp169.

The protein belongs to the UMP kinase family. As to quaternary structure, homohexamer.

It localises to the cytoplasm. The catalysed reaction is UMP + ATP = UDP + ADP. It functions in the pathway pyrimidine metabolism; CTP biosynthesis via de novo pathway; UDP from UMP (UMPK route): step 1/1. Its activity is regulated as follows. Inhibited by UTP. Its function is as follows. Catalyzes the reversible phosphorylation of UMP to UDP. In Polaromonas sp. (strain JS666 / ATCC BAA-500), this protein is Uridylate kinase.